The chain runs to 284 residues: Phosphatidylserine decarboxylase proenzyme (284 aa).

Residues D88, H145, and S248 each act as charge relay system; for autoendoproteolytic cleavage activity in the active site. The Schiff-base intermediate with substrate; via pyruvic acid; for decarboxylase activity role is filled by S248. Pyruvic acid (Ser); by autocatalysis is present on S248.

The protein belongs to the phosphatidylserine decarboxylase family. PSD-B subfamily. Prokaryotic type I sub-subfamily. In terms of assembly, heterodimer of a large membrane-associated beta subunit and a small pyruvoyl-containing alpha subunit. Requires pyruvate as cofactor. In terms of processing, is synthesized initially as an inactive proenzyme. Formation of the active enzyme involves a self-maturation process in which the active site pyruvoyl group is generated from an internal serine residue via an autocatalytic post-translational modification. Two non-identical subunits are generated from the proenzyme in this reaction, and the pyruvate is formed at the N-terminus of the alpha chain, which is derived from the carboxyl end of the proenzyme. The autoendoproteolytic cleavage occurs by a canonical serine protease mechanism, in which the side chain hydroxyl group of the serine supplies its oxygen atom to form the C-terminus of the beta chain, while the remainder of the serine residue undergoes an oxidative deamination to produce ammonia and the pyruvoyl prosthetic group on the alpha chain. During this reaction, the Ser that is part of the protease active site of the proenzyme becomes the pyruvoyl prosthetic group, which constitutes an essential element of the active site of the mature decarboxylase.

The protein resides in the cell membrane. The catalysed reaction is a 1,2-diacyl-sn-glycero-3-phospho-L-serine + H(+) = a 1,2-diacyl-sn-glycero-3-phosphoethanolamine + CO2. The protein operates within phospholipid metabolism; phosphatidylethanolamine biosynthesis; phosphatidylethanolamine from CDP-diacylglycerol: step 2/2. Catalyzes the formation of phosphatidylethanolamine (PtdEtn) from phosphatidylserine (PtdSer). The polypeptide is Phosphatidylserine decarboxylase proenzyme (Delftia acidovorans (strain DSM 14801 / SPH-1)).